We begin with the raw amino-acid sequence, 335 residues long: MIIAVDGMGGDFAPELVVEGCIQAVKEYEGIHIIITGKKELIKNELDKREYNGNKIEILNAEEVISTNEAPVKAIRRKKDSSMVKALELVKEGKAQAVISAGSTGALMAGATFVLGRIKGINRVCLAPLLPGAKAPFMIADAGANVDCKAEYLVQFAMMGKVYFESVLGVKSPTVGLVNIGAEEEKGNELTKAAYKLLKDTDFNFIGNIEPRDIPRGEVNIAVCDGFIGNTVLKTYEGVASNLFSMLKKEIMASTRGKIGGALLKPVFKDFKKKFDYTEYGGSPFLGAKGICIKAHGSSDAKAFKNAIRQAKICYDKKIIEEIENNLGNLIENNI.

Belongs to the PlsX family. As to quaternary structure, homodimer. Probably interacts with PlsY.

The protein resides in the cytoplasm. It carries out the reaction a fatty acyl-[ACP] + phosphate = an acyl phosphate + holo-[ACP]. The protein operates within lipid metabolism; phospholipid metabolism. In terms of biological role, catalyzes the reversible formation of acyl-phosphate (acyl-PO(4)) from acyl-[acyl-carrier-protein] (acyl-ACP). This enzyme utilizes acyl-ACP as fatty acyl donor, but not acyl-CoA. This Clostridium botulinum (strain ATCC 19397 / Type A) protein is Phosphate acyltransferase.